A 237-amino-acid polypeptide reads, in one-letter code: Large ribosomal subunit protein uL3 (237 aa).

2 disordered regions span residues 133-155 (ASHG…DPGK) and 213-237 (PENA…EGGE). Polar residues predominate over residues 135 to 150 (HGNSITHRSHGSTGQR). Q151 is modified (N5-methylglutamine). A compositionally biased stretch (low complexity) spans 220–237 (AGLRAGAKAEAAATEGGE).

The protein belongs to the universal ribosomal protein uL3 family. As to quaternary structure, part of the 50S ribosomal subunit. Forms a cluster with proteins L14 and L19. In terms of processing, methylated by PrmB.

In terms of biological role, one of the primary rRNA binding proteins, it binds directly near the 3'-end of the 23S rRNA, where it nucleates assembly of the 50S subunit. In Brucella abortus (strain S19), this protein is Large ribosomal subunit protein uL3.